A 1193-amino-acid chain; its full sequence is DNA-directed RNA polymerase subunit beta (1193 aa).

Acidic residues predominate over residues 1153–1162 (EMRDLEDDED). The tract at residues 1153-1193 (EMRDLEDDEDAKQNEGLSLPNDEESEELVSADAERDVVTKE) is disordered. The segment covering 1184-1193 (DAERDVVTKE) has biased composition (basic and acidic residues).

The protein belongs to the RNA polymerase beta chain family. The RNAP catalytic core consists of 2 alpha, 1 beta, 1 beta' and 1 omega subunit. When a sigma factor is associated with the core the holoenzyme is formed, which can initiate transcription.

It carries out the reaction RNA(n) + a ribonucleoside 5'-triphosphate = RNA(n+1) + diphosphate. Functionally, DNA-dependent RNA polymerase catalyzes the transcription of DNA into RNA using the four ribonucleoside triphosphates as substrates. The chain is DNA-directed RNA polymerase subunit beta from Bacillus licheniformis (strain ATCC 14580 / DSM 13 / JCM 2505 / CCUG 7422 / NBRC 12200 / NCIMB 9375 / NCTC 10341 / NRRL NRS-1264 / Gibson 46).